Reading from the N-terminus, the 157-residue chain is Protein NrdI (157 aa).

It belongs to the NrdI family.

Its function is as follows. Probably involved in ribonucleotide reductase function. The sequence is that of Protein NrdI from Mycoplasma mycoides subsp. mycoides SC (strain CCUG 32753 / NCTC 10114 / PG1).